A 190-amino-acid polypeptide reads, in one-letter code: Putative manganese efflux pump MntP (190 aa).

6 helical membrane-spanning segments follow: residues 3 to 23 (PISL…AALG), 41 to 61 (LIFG…GQVA), 69 to 89 (DHWI…YNGL), 105 to 125 (FWIL…VGVG), 133 to 153 (IMVA…IGVM), and 168 to 188 (IVGG…HLTA).

The protein belongs to the MntP (TC 9.B.29) family.

The protein resides in the cell inner membrane. In terms of biological role, probably functions as a manganese efflux pump. In Pseudomonas syringae pv. tomato (strain ATCC BAA-871 / DC3000), this protein is Putative manganese efflux pump MntP.